A 1374-amino-acid chain; its full sequence is DNA-directed RNA polymerase subunit beta' (1374 aa).

Residues cysteine 71, cysteine 73, cysteine 86, and cysteine 89 each contribute to the Zn(2+) site. Residues aspartate 462, aspartate 464, and aspartate 466 each contribute to the Mg(2+) site. Zn(2+) is bound by residues cysteine 810, cysteine 884, cysteine 891, and cysteine 894.

Belongs to the RNA polymerase beta' chain family. As to quaternary structure, the RNAP catalytic core consists of 2 alpha, 1 beta, 1 beta' and 1 omega subunit. When a sigma factor is associated with the core the holoenzyme is formed, which can initiate transcription. Mg(2+) serves as cofactor. The cofactor is Zn(2+).

It carries out the reaction RNA(n) + a ribonucleoside 5'-triphosphate = RNA(n+1) + diphosphate. Its function is as follows. DNA-dependent RNA polymerase catalyzes the transcription of DNA into RNA using the four ribonucleoside triphosphates as substrates. The protein is DNA-directed RNA polymerase subunit beta' of Rickettsia massiliae (strain Mtu5).